The chain runs to 319 residues: Acetyl-coenzyme A carboxylase carboxyl transferase subunit alpha (319 aa).

Residues 39-293 (RLQKKSNDLT…KAVLEKQLHE (255 aa)) form the CoA carboxyltransferase C-terminal domain.

It belongs to the AccA family. Acetyl-CoA carboxylase is a heterohexamer composed of biotin carboxyl carrier protein (AccB), biotin carboxylase (AccC) and two subunits each of ACCase subunit alpha (AccA) and ACCase subunit beta (AccD).

The protein resides in the cytoplasm. It catalyses the reaction N(6)-carboxybiotinyl-L-lysyl-[protein] + acetyl-CoA = N(6)-biotinyl-L-lysyl-[protein] + malonyl-CoA. It participates in lipid metabolism; malonyl-CoA biosynthesis; malonyl-CoA from acetyl-CoA: step 1/1. In terms of biological role, component of the acetyl coenzyme A carboxylase (ACC) complex. First, biotin carboxylase catalyzes the carboxylation of biotin on its carrier protein (BCCP) and then the CO(2) group is transferred by the carboxyltransferase to acetyl-CoA to form malonyl-CoA. This Neisseria gonorrhoeae (strain ATCC 700825 / FA 1090) protein is Acetyl-coenzyme A carboxylase carboxyl transferase subunit alpha.